A 291-amino-acid polypeptide reads, in one-letter code: 11-beta-hydroxysteroid dehydrogenase 1 (291 aa).

Residues 1 to 7 lie on the Cytoplasmic side of the membrane; the sequence is MAFMKTH. Residues 8–24 form a helical; Signal-anchor for type II membrane protein membrane-spanning segment; sequence LLPILGLFMAYYYYSAY. The Lumenal segment spans residues 25-291; sequence EEFRPEMLQG…TSYSTDGLIN (267 aa). NADP(+) contacts are provided by residues 41 to 67, 92 to 93, and 119 to 121; these read GASK…TARS, TM, and NHI. N-linked (GlcNAc...) asparagine glycans are attached at residues Asn123 and Asn162. Substrate is bound at residue Ser170. The Proton acceptor role is filled by Tyr183. 183 to 187 provides a ligand contact to NADP(+); that stretch reads YSASK. N-linked (GlcNAc...) asparagine glycosylation is present at Asn207. Residue 218-222 participates in NADP(+) binding; that stretch reads IDTDT.

Belongs to the short-chain dehydrogenases/reductases (SDR) family. As to quaternary structure, homodimer. In terms of tissue distribution, abundantly expressed in the liver, followed by fibroblasts, also detected in the brain, lung, heart, and ovary, and in smaller amounts in kidney, skin, and spleen.

The protein localises to the endoplasmic reticulum membrane. The enzyme catalyses an 11beta-hydroxysteroid + NADP(+) = an 11-oxosteroid + NADPH + H(+). The catalysed reaction is cortisone + NADPH + H(+) = cortisol + NADP(+). It carries out the reaction corticosterone + NADP(+) = 11-dehydrocorticosterone + NADPH + H(+). It catalyses the reaction a 7beta-hydroxysteroid + NADP(+) = a 7-oxosteroid + NADPH + H(+). The enzyme catalyses 7-oxocholesterol + NADPH + H(+) = 7beta-hydroxycholesterol + NADP(+). The catalysed reaction is chenodeoxycholate + NADP(+) = 7-oxolithocholate + NADPH + H(+). It carries out the reaction 7-oxolithocholate + NADPH + H(+) = ursodeoxycholate + NADP(+). It catalyses the reaction glycochenodeoxycholate + NADP(+) = 7-oxoglycolithocholate + NADPH + H(+). The enzyme catalyses taurochenodeoxycholate + NADP(+) = 7-oxotaurolithocholate + NADPH + H(+). The catalysed reaction is tauroursodeoxycholate + NADP(+) = 7-oxotaurolithocholate + NADPH + H(+). It carries out the reaction glycoursodeoxycholate + NADP(+) = 7-oxoglycolithocholate + NADPH + H(+). It catalyses the reaction 7-oxopregnenolone + NADPH + H(+) = 7beta-hydroxypregnenolone + NADP(+). The enzyme catalyses 3beta,7alpha-dihydroxyandrost-5-en-17-one + NADP(+) = 3beta-hydroxy-5-androstene-7,17-dione + NADPH + H(+). The catalysed reaction is 3beta-hydroxy-5-androstene-7,17-dione + NADPH + H(+) = 3beta,7beta-dihydroxyandrost-5-en-17-one + NADP(+). It carries out the reaction 3beta-hydroxy-5alpha-androstane-7,17-dione + NADPH + H(+) = 3beta,7beta-dihydroxy-5alpha-androstan-17-one + NADP(+). Its pathway is steroid metabolism. Functionally, controls the reversible conversion of biologically active glucocorticoids such as cortisone to cortisol, and 11-dehydrocorticosterone to corticosterone in the presence of NADP(H). Participates in the corticosteroid receptor-mediated anti-inflammatory response, as well as metabolic and homeostatic processes. Bidirectional in vitro, predominantly functions as a reductase in vivo, thereby increasing the concentration of active glucocorticoids. It has broad substrate specificity, besides glucocorticoids, it accepts other steroid and sterol substrates. Interconverts 7-oxo- and 7-hydroxy-neurosteroids such as 7-oxopregnenolone and 7beta-hydroxypregnenolone, 7-oxodehydroepiandrosterone (3beta-hydroxy-5-androstene-7,17-dione) and 7beta-hydroxydehydroepiandrosterone (3beta,7beta-dihydroxyandrost-5-en-17-one), among others. Catalyzes the stereo-specific conversion of the major dietary oxysterol, 7-ketocholesterol (7-oxocholesterol), into the more polar 7-beta-hydroxycholesterol metabolite. 7-oxocholesterol is one of the most important oxysterols, it participates in several events such as induction of apoptosis, accumulation in atherosclerotic lesions, lipid peroxidation, and induction of foam cell formation. Mediates the 7-oxo reduction of 7-oxolithocholate mainly to chenodeoxycholate, and to a lesser extent to ursodeoxycholate, both in its free form and when conjugated to glycine or taurine, providing a link between glucocorticoid activation and bile acid metabolism. Catalyzes the synthesis of 7-beta-25-dihydroxycholesterol from 7-oxo-25-hydroxycholesterol in vitro, which acts as a ligand for the G-protein-coupled receptor (GPCR) Epstein-Barr virus-induced gene 2 (EBI2) and may thereby regulate immune cell migration. The protein is 11-beta-hydroxysteroid dehydrogenase 1 (HSD11B1) of Saimiri sciureus (Common squirrel monkey).